A 581-amino-acid chain; its full sequence is NADH-quinone oxidoreductase subunit C/D (581 aa).

The segment at 1 to 172 (MSAVELVNEL…PPFVMTAARF (172 aa)) is NADH dehydrogenase I subunit C. The interval 196-581 (ELMILNYGPH…IDYVMSDVDR (386 aa)) is NADH dehydrogenase I subunit D.

This sequence in the N-terminal section; belongs to the complex I 30 kDa subunit family. In the C-terminal section; belongs to the complex I 49 kDa subunit family. As to quaternary structure, NDH-1 is composed of 13 different subunits. Subunits NuoB, CD, E, F, and G constitute the peripheral sector of the complex.

It is found in the cell inner membrane. It carries out the reaction a quinone + NADH + 5 H(+)(in) = a quinol + NAD(+) + 4 H(+)(out). In terms of biological role, NDH-1 shuttles electrons from NADH, via FMN and iron-sulfur (Fe-S) centers, to quinones in the respiratory chain. The immediate electron acceptor for the enzyme in this species is believed to be ubiquinone. Couples the redox reaction to proton translocation (for every two electrons transferred, four hydrogen ions are translocated across the cytoplasmic membrane), and thus conserves the redox energy in a proton gradient. This is NADH-quinone oxidoreductase subunit C/D from Rhodopseudomonas palustris (strain BisB18).